The primary structure comprises 255 residues: Protein BEAN1 (255 aa).

A helical membrane pass occupies residues 37–57; the sequence is VLVASAVIGVVITLSCITIIV. A compositionally biased stretch (basic residues) spans 69-90; that stretch reads QRHHHRHRRHHHHHRHRRRRHR. 2 disordered regions span residues 69-109 and 160-255; these read QRHH…MPYA and DAPP…ERIV. Positions 193–206 are enriched in polar residues; that stretch reads QRTQGQSRLHTVSM. A compositionally biased stretch (low complexity) spans 217–226; sequence GTGSPSDLLP. Over residues 234–243 the composition is skewed to polar residues; the sequence is PSNSQGSPIP. Positions 244–255 are enriched in pro residues; that stretch reads TQAPMPSPERIV.

Interacts with NEDD4.

It localises to the membrane. In Mus musculus (Mouse), this protein is Protein BEAN1 (Bean1).